The sequence spans 764 residues: Reticulon-1 (764 aa).

Disordered regions lie at residues 1–37 (MAANPEVFSGRLEGNVAAARRPGSAQEEEGEAAGGAL), 115–147 (PDIKEFSGVGPRSPKEIPTFDSRGLLSSDSGIE), 247–400 (LYNS…SEIE), and 455–475 (ESCDGSSASEESPKRDQDSPM). Residues 261–282 (VTISFTGMETTLQTEYPENQQG) are compositionally biased toward polar residues. The segment covering 328–337 (EEQRKYKISE) has biased composition (basic and acidic residues). A Reticulon domain is found at 578 to 764 (AIELLYWRDI…AKIPGTKQKE (187 aa)). 2 helical membrane passes run 607-627 (FSVVSVIAYLALAALSATISF) and 696-716 (VLMWLLTYVGALFNGLTLLIM).

It is found in the endoplasmic reticulum membrane. Its subcellular location is the nucleus. Its function is as follows. Inhibits amyloid precursor protein processing, probably by blocking BACE1 activity. This Xenopus tropicalis (Western clawed frog) protein is Reticulon-1.